The chain runs to 925 residues: Bifunctional glutamine synthetase adenylyltransferase/adenylyl-removing enzyme (925 aa).

Residues M1–K426 are adenylyl removase. An adenylyl transferase region spans residues D436–A925.

Belongs to the GlnE family. Requires Mg(2+) as cofactor.

The enzyme catalyses [glutamine synthetase]-O(4)-(5'-adenylyl)-L-tyrosine + phosphate = [glutamine synthetase]-L-tyrosine + ADP. It catalyses the reaction [glutamine synthetase]-L-tyrosine + ATP = [glutamine synthetase]-O(4)-(5'-adenylyl)-L-tyrosine + diphosphate. Its function is as follows. Involved in the regulation of glutamine synthetase GlnA, a key enzyme in the process to assimilate ammonia. When cellular nitrogen levels are high, the C-terminal adenylyl transferase (AT) inactivates GlnA by covalent transfer of an adenylyl group from ATP to specific tyrosine residue of GlnA, thus reducing its activity. Conversely, when nitrogen levels are low, the N-terminal adenylyl removase (AR) activates GlnA by removing the adenylyl group by phosphorolysis, increasing its activity. The regulatory region of GlnE binds the signal transduction protein PII (GlnB) which indicates the nitrogen status of the cell. In Burkholderia mallei (strain ATCC 23344), this protein is Bifunctional glutamine synthetase adenylyltransferase/adenylyl-removing enzyme.